The following is a 159-amino-acid chain: MDIRLGNGFDVHAFGPGDHVTLCGVKIPHGQGLVGHSDADVAMHTVTDAIYGALAMGDIGQHFPPSDPQWKGAASDIFLKHAVAQASEQGFEINNVDCTLICEFPKIGPHAQAMREAMARIMGMALSRISVKATTSERLGFTGRGEGIACIATAALVRA.

Residues Asp10 and His12 each coordinate a divalent metal cation. Residues 10–12 and 36–37 each bind 4-CDP-2-C-methyl-D-erythritol 2-phosphate; these read DVH and HS. A divalent metal cation is bound at residue His44. Residues 58–60, 134–137, Phe141, and Arg144 each bind 4-CDP-2-C-methyl-D-erythritol 2-phosphate; these read DIG and TTSE.

This sequence belongs to the IspF family. In terms of assembly, homotrimer. Requires a divalent metal cation as cofactor.

It carries out the reaction 4-CDP-2-C-methyl-D-erythritol 2-phosphate = 2-C-methyl-D-erythritol 2,4-cyclic diphosphate + CMP. It participates in isoprenoid biosynthesis; isopentenyl diphosphate biosynthesis via DXP pathway; isopentenyl diphosphate from 1-deoxy-D-xylulose 5-phosphate: step 4/6. Its function is as follows. Involved in the biosynthesis of isopentenyl diphosphate (IPP) and dimethylallyl diphosphate (DMAPP), two major building blocks of isoprenoid compounds. Catalyzes the conversion of 4-diphosphocytidyl-2-C-methyl-D-erythritol 2-phosphate (CDP-ME2P) to 2-C-methyl-D-erythritol 2,4-cyclodiphosphate (ME-CPP) with a corresponding release of cytidine 5-monophosphate (CMP). The sequence is that of 2-C-methyl-D-erythritol 2,4-cyclodiphosphate synthase from Roseobacter denitrificans (strain ATCC 33942 / OCh 114) (Erythrobacter sp. (strain OCh 114)).